A 154-amino-acid polypeptide reads, in one-letter code: Putative pre-16S rRNA nuclease (154 aa).

The protein belongs to the YqgF nuclease family.

The protein resides in the cytoplasm. Could be a nuclease involved in processing of the 5'-end of pre-16S rRNA. This chain is Putative pre-16S rRNA nuclease, found in Pelotomaculum thermopropionicum (strain DSM 13744 / JCM 10971 / SI).